A 330-amino-acid polypeptide reads, in one-letter code: 5'-AMP-activated protein kinase subunit gamma-1 (330 aa).

The tract at residues 1-21 (MESVAAESSPALENEHFQETP) is disordered. CBS domains follow at residues 42–102 (PTSS…KSAL), 124–186 (SFKP…PKPE), and 197–259 (IGTY…NLDV). ADP is bound by residues arginine 69, 84 to 89 (MLTITD), valine 129, 150 to 151 (HR), and lysine 169. Residues arginine 69, 84–89 (MLTITD), valine 129, histidine 150, 150–151 (HR), lysine 169, threonine 199, alanine 204, 225–226 (SA), and 241–244 (SKFD) contribute to the AMP site. ATP-binding positions include arginine 69, 84–89 (MLTITD), valine 129, 150–151 (HR), arginine 151, and lysine 169. The AMPK pseudosubstrate signature appears at 137 to 158 (LFDAVSSLIRNKIHRLPVIDPE). ADP is bound at residue 241 to 244 (SKFD). 241-244 (SKFD) contributes to the ATP binding site. Phosphoserine; by ULK1 is present on serine 260. Residue threonine 262 is modified to Phosphothreonine; by ULK1. Arginine 268 lines the ADP pocket. Arginine 268 is an AMP binding site. Arginine 268 contributes to the ATP binding site. Phosphoserine; by ULK1 is present on serine 269. The CBS 4 domain maps to 271 to 328 (YFEGVLKCYLHETLETIINRLVEAEVHRLVVVDEHDVVKGIVSLSDILQALVLTGGEK). ADP is bound by residues leucine 276 and 297-298 (HR). Residues leucine 276, histidine 297, 297-298 (HR), and 313-316 (SLSD) each bind AMP. Residues leucine 276 and 297–298 (HR) each bind ATP.

Belongs to the 5'-AMP-activated protein kinase gamma subunit family. In terms of assembly, AMPK is a heterotrimer of an alpha catalytic subunit (PRKAA1 or PRKAA2), a beta (PRKAB1 or PRKAB2) and a gamma non-catalytic subunits (PRKAG1, PRKAG2 or PRKAG3). Interacts with FNIP1 and FNIP2. In terms of processing, phosphorylated by ULK1 and ULK2; leading to negatively regulate AMPK activity and suggesting the existence of a regulatory feedback loop between ULK1, ULK2 and AMPK. Glycosylated; O-GlcNAcylated by OGT, promoting the AMP-activated protein kinase (AMPK) activity.

In terms of biological role, AMP/ATP-binding subunit of AMP-activated protein kinase (AMPK), an energy sensor protein kinase that plays a key role in regulating cellular energy metabolism. In response to reduction of intracellular ATP levels, AMPK activates energy-producing pathways and inhibits energy-consuming processes: inhibits protein, carbohydrate and lipid biosynthesis, as well as cell growth and proliferation. AMPK acts via direct phosphorylation of metabolic enzymes, and by longer-term effects via phosphorylation of transcription regulators. Also acts as a regulator of cellular polarity by remodeling the actin cytoskeleton; probably by indirectly activating myosin. Gamma non-catalytic subunit mediates binding to AMP, ADP and ATP, leading to activate or inhibit AMPK: AMP-binding results in allosteric activation of alpha catalytic subunit (PRKAA1 or PRKAA2) both by inducing phosphorylation and preventing dephosphorylation of catalytic subunits. ADP also stimulates phosphorylation, without stimulating already phosphorylated catalytic subunit. ATP promotes dephosphorylation of catalytic subunit, rendering the AMPK enzyme inactive. The chain is 5'-AMP-activated protein kinase subunit gamma-1 (Prkag1) from Mus musculus (Mouse).